The chain runs to 84 residues: Cytochrome b559 subunit alpha (84 aa).

The chain crosses the membrane as a helical span at residues 21–35 (VIHSITIPSLFIAGW). His-23 provides a ligand contact to heme.

It belongs to the PsbE/PsbF family. As to quaternary structure, heterodimer of an alpha subunit and a beta subunit. PSII is composed of 1 copy each of membrane proteins PsbA, PsbB, PsbC, PsbD, PsbE, PsbF, PsbH, PsbI, PsbJ, PsbK, PsbL, PsbM, PsbT, PsbX, PsbY, PsbZ, Psb30/Ycf12, at least 3 peripheral proteins of the oxygen-evolving complex and a large number of cofactors. It forms dimeric complexes. Requires heme b as cofactor.

It is found in the plastid membrane. In terms of biological role, this b-type cytochrome is tightly associated with the reaction center of photosystem II (PSII). PSII is a light-driven water:plastoquinone oxidoreductase that uses light energy to abstract electrons from H(2)O, generating O(2) and a proton gradient subsequently used for ATP formation. It consists of a core antenna complex that captures photons, and an electron transfer chain that converts photonic excitation into a charge separation. This chain is Cytochrome b559 subunit alpha, found in Cuscuta gronovii (Common dodder).